A 193-amino-acid chain; its full sequence is Ribose 1,5-bisphosphate phosphokinase PhnN (193 aa).

9 to 16 (GPSGAGKD) contacts ATP.

Belongs to the ribose 1,5-bisphosphokinase family.

The enzyme catalyses alpha-D-ribose 1,5-bisphosphate + ATP = 5-phospho-alpha-D-ribose 1-diphosphate + ADP. The protein operates within metabolic intermediate biosynthesis; 5-phospho-alpha-D-ribose 1-diphosphate biosynthesis; 5-phospho-alpha-D-ribose 1-diphosphate from D-ribose 5-phosphate (route II): step 3/3. Catalyzes the phosphorylation of ribose 1,5-bisphosphate to 5-phospho-D-ribosyl alpha-1-diphosphate (PRPP). The chain is Ribose 1,5-bisphosphate phosphokinase PhnN from Yersinia pestis.